A 271-amino-acid polypeptide reads, in one-letter code: Formamidopyrimidine-DNA glycosylase (271 aa).

The active-site Schiff-base intermediate with DNA is P2. The active-site Proton donor is the E3. The Proton donor; for beta-elimination activity role is filled by K57. 3 residues coordinate DNA: H90, R109, and K151. The FPG-type zinc finger occupies 236 to 270 (HVYGRGGETCTECGHLLSEIRLGQRTTVFCSLCQT). R260 functions as the Proton donor; for delta-elimination activity in the catalytic mechanism.

The protein belongs to the FPG family. As to quaternary structure, monomer. It depends on Zn(2+) as a cofactor.

The enzyme catalyses Hydrolysis of DNA containing ring-opened 7-methylguanine residues, releasing 2,6-diamino-4-hydroxy-5-(N-methyl)formamidopyrimidine.. It carries out the reaction 2'-deoxyribonucleotide-(2'-deoxyribose 5'-phosphate)-2'-deoxyribonucleotide-DNA = a 3'-end 2'-deoxyribonucleotide-(2,3-dehydro-2,3-deoxyribose 5'-phosphate)-DNA + a 5'-end 5'-phospho-2'-deoxyribonucleoside-DNA + H(+). Its function is as follows. Involved in base excision repair of DNA damaged by oxidation or by mutagenic agents. Acts as a DNA glycosylase that recognizes and removes damaged bases. Has a preference for oxidized purines, such as 7,8-dihydro-8-oxoguanine (8-oxoG). Has AP (apurinic/apyrimidinic) lyase activity and introduces nicks in the DNA strand. Cleaves the DNA backbone by beta-delta elimination to generate a single-strand break at the site of the removed base with both 3'- and 5'-phosphates. The sequence is that of Formamidopyrimidine-DNA glycosylase from Shewanella amazonensis (strain ATCC BAA-1098 / SB2B).